The sequence spans 257 residues: MLPSDLVKYKKNSQKIIALTAWDSISGSIAEQANVDLVLVGDSLAMVCLGYKSTLPLTLGNIIYHTNAVSRGFKKNIEEQPLVIADMPFLTYQCGEDKAVEYAGKIIQSTYAKAVKIEGAEPEIQKVISRLIRMGIPVMGHIGLTPQSYLNLGLKKQGESLESQEKIKKEASILEKLGCFSIVLEHIPDLLAKEIQNTLTIPTIGIGAGNYCDGQVRVTADLLGLNDDQPPFCQPIIQGKELFMKKLKEWVESERLN.

The Mg(2+) site is built by Asp-42 and Asp-86. 3-methyl-2-oxobutanoate-binding positions include 42-43, Asp-86, and Lys-116; that span reads DS. Glu-118 contacts Mg(2+). The Proton acceptor role is filled by Glu-185.

It belongs to the PanB family. As to quaternary structure, homodecamer; pentamer of dimers. Mg(2+) is required as a cofactor.

The protein resides in the cytoplasm. The enzyme catalyses 3-methyl-2-oxobutanoate + (6R)-5,10-methylene-5,6,7,8-tetrahydrofolate + H2O = 2-dehydropantoate + (6S)-5,6,7,8-tetrahydrofolate. It functions in the pathway cofactor biosynthesis; (R)-pantothenate biosynthesis; (R)-pantoate from 3-methyl-2-oxobutanoate: step 1/2. Its function is as follows. Catalyzes the reversible reaction in which hydroxymethyl group from 5,10-methylenetetrahydrofolate is transferred onto alpha-ketoisovalerate to form ketopantoate. The protein is 3-methyl-2-oxobutanoate hydroxymethyltransferase of Prochlorococcus marinus (strain MIT 9215).